The following is a 153-amino-acid chain: Endoribonuclease YbeY (153 aa).

Residues His114, His118, and His124 each contribute to the Zn(2+) site.

The protein belongs to the endoribonuclease YbeY family. It depends on Zn(2+) as a cofactor.

The protein localises to the cytoplasm. Its function is as follows. Single strand-specific metallo-endoribonuclease involved in late-stage 70S ribosome quality control and in maturation of the 3' terminus of the 16S rRNA. The chain is Endoribonuclease YbeY from Shewanella sp. (strain MR-7).